A 225-amino-acid polypeptide reads, in one-letter code: Orotate phosphoribosyltransferase (225 aa).

Lysine 29 serves as a coordination point for 5-phospho-alpha-D-ribose 1-diphosphate. 37-38 (FF) contacts orotate. 5-phospho-alpha-D-ribose 1-diphosphate-binding positions include 75–76 (YK), arginine 105, lysine 106, lysine 109, histidine 111, and 130–138 (DDVITAGTS). Threonine 134 and arginine 162 together coordinate orotate.

It belongs to the purine/pyrimidine phosphoribosyltransferase family. PyrE subfamily. In terms of assembly, homodimer. Mg(2+) serves as cofactor.

It catalyses the reaction orotidine 5'-phosphate + diphosphate = orotate + 5-phospho-alpha-D-ribose 1-diphosphate. Its pathway is pyrimidine metabolism; UMP biosynthesis via de novo pathway; UMP from orotate: step 1/2. In terms of biological role, catalyzes the transfer of a ribosyl phosphate group from 5-phosphoribose 1-diphosphate to orotate, leading to the formation of orotidine monophosphate (OMP). The polypeptide is Orotate phosphoribosyltransferase (Bordetella petrii (strain ATCC BAA-461 / DSM 12804 / CCUG 43448)).